Consider the following 156-residue polypeptide: Snaclec A14 (156 aa).

The signal sequence occupies residues 1–23 (MGRFIFVRVGLLVVFLSLSGTGA). Disulfide bonds link C27/C38, C55/C152, and C127/C144. The 120-residue stretch at 34–153 (YDQHCYKAFD…CGDDYPFVCK (120 aa)) folds into the C-type lectin domain. N141 carries N-linked (GlcNAc...) asparagine glycosylation.

The protein belongs to the snaclec family. As to quaternary structure, heterodimer; disulfide-linked. Expressed by the venom gland.

It localises to the secreted. Interferes with one step of hemostasis (modulation of platelet aggregation, or coagulation cascade, for example). The chain is Snaclec A14 from Macrovipera lebetinus (Levantine viper).